Reading from the N-terminus, the 316-residue chain is Protein lifeguard 2 (316 aa).

The tract at residues 1-46 (MTQGKLSVANKAPGTEGQQQANGEKKETPAVPSAPPSYEEATSGEG) is disordered. The next 3 helical transmembrane spans lie at 106–126 (VYTILLIQLLVTLGVVALFTF), 138–158 (PGWYWASYAVFFATYLTLACC), and 165–185 (FPWNLILLTIFTLSMAYLTGM). N-linked (GlcNAc...) asparagine glycosylation occurs at Asn191. Transmembrane regions (helical) follow at residues 194-214 (SVLLCLSITALVCLSVTVFSF), 225-245 (GVLFVLLMTLFFSGLILAILL), 251-271 (PWLHAVYAVLGAGVFTLFLAF), and 290-310 (IFGALNIYLDIIYIFTFFLQL).

It belongs to the BI1 family. LFG subfamily. In terms of assembly, interacts with FAS/TNFRSF6 and BAX.

The protein localises to the cell membrane. It localises to the membrane raft. The protein resides in the postsynaptic cell membrane. Its function is as follows. Antiapoptotic protein which protects cells uniquely from Fas-induced apoptosis. Regulates Fas-mediated apoptosis in neurons by interfering with caspase-8 activation. Plays a role in cerebellar development by affecting cerebellar size, internal granular layer (IGL) thickness, and Purkinje cell (PC) development. The protein is Protein lifeguard 2 (FAIM2) of Bos taurus (Bovine).